The following is a 272-amino-acid chain: Shikimate dehydrogenase (NADP(+)) (272 aa).

Residues 14–16 (SLS) and Thr61 each bind shikimate. Lys65 (proton acceptor) is an active-site residue. Asp102 is a binding site for shikimate. Residues 127–131 (GAGGA), 151–156 (NRTPSK), and Leu215 contribute to the NADP(+) site. Residue Tyr217 participates in shikimate binding. Gly239 contacts NADP(+).

This sequence belongs to the shikimate dehydrogenase family. In terms of assembly, homodimer.

It catalyses the reaction shikimate + NADP(+) = 3-dehydroshikimate + NADPH + H(+). It functions in the pathway metabolic intermediate biosynthesis; chorismate biosynthesis; chorismate from D-erythrose 4-phosphate and phosphoenolpyruvate: step 4/7. Involved in the biosynthesis of the chorismate, which leads to the biosynthesis of aromatic amino acids. Catalyzes the reversible NADPH linked reduction of 3-dehydroshikimate (DHSA) to yield shikimate (SA). This Coxiella burnetii (strain CbuK_Q154) (Coxiella burnetii (strain Q154)) protein is Shikimate dehydrogenase (NADP(+)).